The sequence spans 85 residues: Small ribosomal subunit protein bS16 (85 aa).

This sequence belongs to the bacterial ribosomal protein bS16 family.

This is Small ribosomal subunit protein bS16 from Pseudomonas savastanoi pv. phaseolicola (strain 1448A / Race 6) (Pseudomonas syringae pv. phaseolicola (strain 1448A / Race 6)).